The chain runs to 241 residues: ATP synthase subunit a (241 aa).

Transmembrane regions (helical) follow at residues 30 to 50 (GQVF…VVVG), 91 to 111 (FIGT…LIPW), 128 to 148 (INTT…AGLS), 193 to 213 (LVVA…VMFL), and 214 to 234 (GLFT…YYIG).

Belongs to the ATPase A chain family. F-type ATPases have 2 components, CF(1) - the catalytic core - and CF(0) - the membrane proton channel. CF(1) has five subunits: alpha(3), beta(3), gamma(1), delta(1), epsilon(1). CF(0) has four main subunits: a, b, b' and c.

The protein resides in the cellular thylakoid membrane. Its function is as follows. Key component of the proton channel; it plays a direct role in the translocation of protons across the membrane. The sequence is that of ATP synthase subunit a from Prochlorococcus marinus (strain SARG / CCMP1375 / SS120).